The primary structure comprises 346 residues: Protein RecA (346 aa).

67 to 74 (GPESSGKT) lines the ATP pocket.

The protein belongs to the RecA family.

The protein resides in the cytoplasm. Its function is as follows. Can catalyze the hydrolysis of ATP in the presence of single-stranded DNA, the ATP-dependent uptake of single-stranded DNA by duplex DNA, and the ATP-dependent hybridization of homologous single-stranded DNAs. It interacts with LexA causing its activation and leading to its autocatalytic cleavage. This Mycobacteroides abscessus (strain ATCC 19977 / DSM 44196 / CCUG 20993 / CIP 104536 / JCM 13569 / NCTC 13031 / TMC 1543 / L948) (Mycobacterium abscessus) protein is Protein RecA.